The chain runs to 416 residues: Ferrochelatase, mitochondrial (416 aa).

Residues 1–47 (MAAALRSAGVLLRDRLLYGGSRACQPRRCQSGAATAAAATETAQRAR) constitute a mitochondrion transit peptide. The disordered stretch occupies residues 41-62 (ETAQRARSPKPQAQPGNRKPRT). The residue at position 50 (Lys-50) is an N6-acetyllysine. Residues Arg-108, Tyr-116, and Ser-123 each contribute to the protoporphyrin IX site. N6-succinyllysine is present on Lys-131. A [2Fe-2S] cluster-binding site is contributed by Cys-189. His-223 is an active-site residue. N6-acetyllysine; alternate is present on Lys-283. An N6-succinyllysine; alternate modification is found at Lys-283. Residue Asp-376 is part of the active site. [2Fe-2S] cluster-binding residues include Cys-396, Cys-399, and Cys-404. Residue Lys-408 is modified to N6-acetyllysine; alternate. At Lys-408 the chain carries N6-succinyllysine; alternate.

This sequence belongs to the ferrochelatase family. As to quaternary structure, homodimer. Homotetramer. Interaction with PGRMC1; the interaction results in decreased FECH activity. Interacts with ABCB10 and SLC25A37; this interaction forms an oligomeric complex. Forms a complex with ABCB7 and ABCB10, where a dimeric FECH bridges ABCB7 and ABCB10 homodimers; this complex may be required for cellular iron homeostasis, mitochondrial function and heme biosynthesis. Interacts with ABCB7 and ABCB10. [2Fe-2S] cluster serves as cofactor.

It localises to the mitochondrion inner membrane. The enzyme catalyses heme b + 2 H(+) = protoporphyrin IX + Fe(2+). Its pathway is porphyrin-containing compound metabolism; protoheme biosynthesis; protoheme from protoporphyrin-IX: step 1/1. Its function is as follows. Catalyzes the ferrous insertion into protoporphyrin IX and participates in the terminal step in the heme biosynthetic pathway. The protein is Ferrochelatase, mitochondrial of Bos taurus (Bovine).